The chain runs to 379 residues: MATAGKVIKCKAAVAWEAGKPLSIEEVEVAPPQAMEVRVKILYTALCHTDVYFWEAKGQTPVFPRILGHEAGGIVESVGEGVTELVPGDHVLPVFTGECKDCAHCKSEESNLCDLLRINVDRGVMIGDGQSRFTINGKPIFHFVGTSTFSEYTVIHVGCLAKINPEAPLDKVCVLSCGLSTGLGATLNVAKPKKGSTVAIFGLGAVGLAAMEGARMAGASRIIGVDLNPAKYEQAKKFGCTDFVNPKDHTKPVQEVLVEMTNGGVDRAVECTGHIDAMIATFECVHDGWGVAVLVGVPHKEAVFKTHPMNFLNEKTLKGTFFGNYKPRTDLPEVVEMYMRKELDLEKFITHSVPFSQINTAFDLMLKGEGLRCITRTDQ.

Zn(2+) contacts are provided by cysteine 47, threonine 49, histidine 69, cysteine 99, cysteine 102, cysteine 105, cysteine 113, and cysteine 177. An alcohol is bound by residues threonine 49 and histidine 69. Threonine 49 contacts NAD(+). Residues 202 to 207, aspartate 226, lysine 231, threonine 272, valine 295, 295 to 297, phenylalanine 322, and arginine 372 each bind NAD(+); these read GLGAVG and VGV.

It belongs to the zinc-containing alcohol dehydrogenase family. As to quaternary structure, homodimer. Requires Zn(2+) as cofactor.

The protein resides in the cytoplasm. The catalysed reaction is a primary alcohol + NAD(+) = an aldehyde + NADH + H(+). The enzyme catalyses a secondary alcohol + NAD(+) = a ketone + NADH + H(+). The chain is Alcohol dehydrogenase 3 (ADH3) from Hordeum vulgare (Barley).